The sequence spans 391 residues: Na(+)/H(+) antiporter NhaA 1 (391 aa).

11 helical membrane passes run 19–39 (FLAS…AALI), 56–76 (VWLG…IFFL), 98–118 (ALPG…YIAI), 128–148 (GWAI…SLLG), 157–177 (VFLA…IAFF), 180–200 (SGLN…LIAL), 208–228 (LLPY…SGVH), 264–284 (VAFA…LSGI), 297–317 (VALG…VLAI), 335–355 (GVAI…NLAF), and 364–384 (EVKV…ILLL).

The protein belongs to the NhaA Na(+)/H(+) (TC 2.A.33) antiporter family.

The protein resides in the cell inner membrane. It carries out the reaction Na(+)(in) + 2 H(+)(out) = Na(+)(out) + 2 H(+)(in). Its function is as follows. Na(+)/H(+) antiporter that extrudes sodium in exchange for external protons. The polypeptide is Na(+)/H(+) antiporter NhaA 1 (Pseudomonas savastanoi pv. phaseolicola (strain 1448A / Race 6) (Pseudomonas syringae pv. phaseolicola (strain 1448A / Race 6))).